The chain runs to 184 residues: Spiro-conjugate synthase (184 aa).

Cys57 and Cys184 are joined by a disulfide. Residue Gln115 participates in (1S,3R,6R,8R,9R,11R,14S,15S,19R,20R)-8-ethyl-9,15-dihydroxy-3,4,6,20-tetramethyl-21,23-dioxo-24-azapentacyclo[20.2.1.0(1,6).0(11,20).0(14,19)]pentacosa-4,12,22(25)-trien-25-olate binding.

Homodimer.

The enzyme catalyses 4-[(1R,2R,4aS,5S,8aR)-2-[(2R,3R,5E,7E)-3-ethyl-2-hydroxy-5,7-dimethylnona-5,7-dien-1-yl]-5-hydroxy-1-methyl-1,2,4a,5,6,7,8,8a-octahydronaphthalene-1-carbonyl]-2-methylidene-5-oxo-2,5-dihydro-1H-pyrrol-3-olate = (1S,3R,6R,8R,9R,11R,14S,15S,19R,20R)-8-ethyl-9,15-dihydroxy-3,4,6,20-tetramethyl-21,23-dioxo-24-azapentacyclo[20.2.1.0(1,6).0(11,20).0(14,19)]pentacosa-4,12,22(25)-trien-25-olate. It functions in the pathway antibiotic biosynthesis. Involved in the biosynthesis of the spirotetramate antibiotics pyrroindomycins. Catalyzes the intramolecular cyclization forming the spiro-conjugate moiety in pyrroindomycins, via an exo-selective [4+2] cycloaddition reaction. This chain is Spiro-conjugate synthase, found in Streptomyces rugosporus.